Here is a 367-residue protein sequence, read N- to C-terminus: GTP cyclohydrolase FolE2 (367 aa).

The protein belongs to the GTP cyclohydrolase IV family.

It carries out the reaction GTP + H2O = 7,8-dihydroneopterin 3'-triphosphate + formate + H(+). It functions in the pathway cofactor biosynthesis; 7,8-dihydroneopterin triphosphate biosynthesis; 7,8-dihydroneopterin triphosphate from GTP: step 1/1. Its function is as follows. Converts GTP to 7,8-dihydroneopterin triphosphate. The polypeptide is GTP cyclohydrolase FolE2 (Dinoroseobacter shibae (strain DSM 16493 / NCIMB 14021 / DFL 12)).